The sequence spans 357 residues: DNA replication and repair protein RecF (357 aa).

31 to 38 (GQNGAGKT) lines the ATP pocket.

The protein belongs to the RecF family.

Its subcellular location is the cytoplasm. The RecF protein is involved in DNA metabolism; it is required for DNA replication and normal SOS inducibility. RecF binds preferentially to single-stranded, linear DNA. It also seems to bind ATP. The protein is DNA replication and repair protein RecF of Coxiella burnetii (strain Dugway 5J108-111).